The chain runs to 398 residues: Phosphoglycerate kinase (398 aa).

Substrate-binding positions include 21–23 (DFN), Arg-36, 59–62 (HLGR), Arg-119, and Arg-157. ATP contacts are provided by residues Lys-208, Gly-296, Glu-327, and 354–357 (GGDS).

This sequence belongs to the phosphoglycerate kinase family. In terms of assembly, monomer.

The protein localises to the cytoplasm. It catalyses the reaction (2R)-3-phosphoglycerate + ATP = (2R)-3-phospho-glyceroyl phosphate + ADP. Its pathway is carbohydrate degradation; glycolysis; pyruvate from D-glyceraldehyde 3-phosphate: step 2/5. This chain is Phosphoglycerate kinase, found in Streptococcus pyogenes serotype M3 (strain ATCC BAA-595 / MGAS315).